A 168-amino-acid chain; its full sequence is Transcriptional regulator MraZ (168 aa).

2 consecutive SpoVT-AbrB domains span residues 8 to 51 and 90 to 140; these read EYNQ…GGDR and ALNM…KADI.

This sequence belongs to the MraZ family. In terms of assembly, forms oligomers.

The protein localises to the cytoplasm. It is found in the nucleoid. The protein is Transcriptional regulator MraZ of Cereibacter sphaeroides (strain KD131 / KCTC 12085) (Rhodobacter sphaeroides).